A 366-amino-acid polypeptide reads, in one-letter code: Small ribosomal subunit biogenesis GTPase RsgA (366 aa).

Residues 107 to 266 (RSEGQILAAN…LIDTPGLRGV (160 aa)) enclose the CP-type G domain. Residues 154–157 (TKAD) and 208–216 (GQSGAGKST) contribute to the GTP site. 4 residues coordinate Zn(2+): C289, C294, H296, and C302.

The protein belongs to the TRAFAC class YlqF/YawG GTPase family. RsgA subfamily. In terms of assembly, monomer. Associates with 30S ribosomal subunit, binds 16S rRNA. Requires Zn(2+) as cofactor.

The protein localises to the cytoplasm. One of several proteins that assist in the late maturation steps of the functional core of the 30S ribosomal subunit. Helps release RbfA from mature subunits. May play a role in the assembly of ribosomal proteins into the subunit. Circularly permuted GTPase that catalyzes slow GTP hydrolysis, GTPase activity is stimulated by the 30S ribosomal subunit. This is Small ribosomal subunit biogenesis GTPase RsgA from Streptomyces coelicolor (strain ATCC BAA-471 / A3(2) / M145).